The sequence spans 148 residues: uncharacterized protein (148 aa).

Residues 4 to 65 (LDKVDIQLVK…IPDLDKLGYM (62 aa)) form the HTH asnC-type domain. Positions 23 to 42 (YRELAELMNTTRQRIARRIT) form a DNA-binding region, H-T-H motif.

This is an uncharacterized protein from Pyrococcus abyssi (strain GE5 / Orsay).